Here is a 395-residue protein sequence, read N- to C-terminus: Phosphoglycerate kinase (395 aa).

Substrate is bound by residues 22–24 (DFN), arginine 38, 61–64 (HLGR), arginine 119, and arginine 152. ATP is bound by residues lysine 203, glycine 294, glutamate 325, and 351–354 (GGDT).

Belongs to the phosphoglycerate kinase family. In terms of assembly, monomer.

The protein resides in the cytoplasm. It catalyses the reaction (2R)-3-phosphoglycerate + ATP = (2R)-3-phospho-glyceroyl phosphate + ADP. It participates in carbohydrate degradation; glycolysis; pyruvate from D-glyceraldehyde 3-phosphate: step 2/5. The protein is Phosphoglycerate kinase of Hydrogenobaculum sp. (strain Y04AAS1).